The sequence spans 85 residues: Large ribosomal subunit protein eL43 (85 aa).

A C4-type zinc finger spans residues C38 to C59.

It belongs to the eukaryotic ribosomal protein eL43 family. The cofactor is Zn(2+).

This is Large ribosomal subunit protein eL43 from Thermococcus sibiricus (strain DSM 12597 / MM 739).